Reading from the N-terminus, the 145-residue chain is 3-dehydroquinate dehydratase (145 aa).

Residue Y22 is the Proton acceptor of the active site. Substrate-binding residues include N71, H77, and D84. Residue H97 is the Proton donor of the active site. Substrate contacts are provided by residues 98 to 99 (LS) and R108.

This sequence belongs to the type-II 3-dehydroquinase family. Homododecamer.

It carries out the reaction 3-dehydroquinate = 3-dehydroshikimate + H2O. It participates in metabolic intermediate biosynthesis; chorismate biosynthesis; chorismate from D-erythrose 4-phosphate and phosphoenolpyruvate: step 3/7. In terms of biological role, catalyzes a trans-dehydration via an enolate intermediate. The sequence is that of 3-dehydroquinate dehydratase from Francisella tularensis subsp. tularensis (strain WY96-3418).